A 489-amino-acid chain; its full sequence is Glycogen synthase (489 aa).

Arg-20 contributes to the ADP-alpha-D-glucose binding site.

It belongs to the glycosyltransferase 1 family. Bacterial/plant glycogen synthase subfamily.

It catalyses the reaction [(1-&gt;4)-alpha-D-glucosyl](n) + ADP-alpha-D-glucose = [(1-&gt;4)-alpha-D-glucosyl](n+1) + ADP + H(+). The protein operates within glycan biosynthesis; glycogen biosynthesis. Synthesizes alpha-1,4-glucan chains using ADP-glucose. The chain is Glycogen synthase from Chlorobium chlorochromatii (strain CaD3).